The following is a 369-amino-acid chain: Peptide chain release factor 2 (369 aa).

The residue at position 252 (Gln252) is an N5-methylglutamine.

The protein belongs to the prokaryotic/mitochondrial release factor family. Post-translationally, methylated by PrmC. Methylation increases the termination efficiency of RF2.

It localises to the cytoplasm. Peptide chain release factor 2 directs the termination of translation in response to the peptide chain termination codons UGA and UAA. This is Peptide chain release factor 2 from Staphylococcus aureus (strain bovine RF122 / ET3-1).